Reading from the N-terminus, the 132-residue chain is Ribosome-binding factor A (132 aa).

This sequence belongs to the RbfA family. As to quaternary structure, monomer. Binds 30S ribosomal subunits, but not 50S ribosomal subunits or 70S ribosomes.

It is found in the cytoplasm. In terms of biological role, one of several proteins that assist in the late maturation steps of the functional core of the 30S ribosomal subunit. Associates with free 30S ribosomal subunits (but not with 30S subunits that are part of 70S ribosomes or polysomes). Required for efficient processing of 16S rRNA. May interact with the 5'-terminal helix region of 16S rRNA. In Prochlorococcus marinus (strain MIT 9515), this protein is Ribosome-binding factor A.